The following is a 307-amino-acid chain: 2-haloacid dehalogenase, configuration-inverting (307 aa).

The protein belongs to the HAD-like hydrolase superfamily. S-2-haloalkanoic acid dehalogenase family. Homodimer.

The catalysed reaction is an (S)-2-haloacid + H2O = a (2R)-2-hydroxycarboxylate + a halide anion + H(+). It catalyses the reaction an (R)-2-haloacid + H2O = a (2S)-2-hydroxycarboxylate + a halide anion + H(+). Functionally, dehalogenates both (S)- and (R)-2-haloalkanoic acids to the corresponding (R)- and (S)-hydroxyalkanoic acids, respectively, with inversion of configuration at C-2. Acts on 2-haloalkanoic acids whose carbon chain lengths are five or less. The protein is 2-haloacid dehalogenase, configuration-inverting of Pseudomonas sp. (strain 113).